The chain runs to 887 residues: Transcriptional regulator DEF1 (887 aa).

Polar residues predominate over residues 1-13 (MERRQFNTSNIRN). 8 disordered regions span residues 1–117 (MERR…IQPG), 203–293 (KRSL…ESNA), 311–330 (NNETNNTGESNSTSQQPRQL), 350–542 (PVLG…QQAQ), 555–578 (NRPPSQQRQYSQTPQYNQPPPQQK), 614–675 (QAPQ…QVPK), 696–758 (QRTL…TQEQ), and 813–887 (NNAN…NLLN). The span at 57–75 (SSSQSNSVQNQDQSEDQSQ) shows a compositional bias: low complexity. The segment covering 76–107 (LPQQESNTQQESNTQQESNTPSPRASNTSTET) has biased composition (polar residues). A coiled-coil region spans residues 199-234 (EEMRKRSLENSRKRELEEAQEREESNKRQHTESSAE). The segment covering 203–231 (KRSLENSRKRELEEAQEREESNKRQHTES) has biased composition (basic and acidic residues). A compositionally biased stretch (low complexity) spans 232–254 (SAEPNAESSTESTTESNAESGAE). Residues 261 to 270 (AESTTESNVE) are compositionally biased toward polar residues. Residues 311–326 (NNETNNTGESNSTSQQ) are compositionally biased toward low complexity. The span at 364–393 (KTSLTGSQNKVHSTNTQQSQKHPQQILTNS) shows a compositional bias: polar residues. Low complexity-rich tracts occupy residues 399–408 (QQYSAQSQQQ), 428–456 (QQQQKQPSVPTSSVPLQVSQKQNQQQQEL), 475–519 (QQQS…QVQT), and 526–542 (QPQTQLSQQQQQQQQAQ). A compositionally biased stretch (low complexity) spans 622–640 (YQHHYQQVQQRQNQQPYMQ). Residues 641 to 658 (SAPTYQQPHVQTPKSTRS) show a composition bias toward polar residues. Over residues 696–710 (QRTLDNGREPERLRT) the composition is skewed to basic and acidic residues. Over residues 729 to 745 (RSKQSSNQKPVVKQQSS) the composition is skewed to polar residues. Residues 829 to 844 (TNTRGGRASTRSSGRP) are compositionally biased toward low complexity. Polar residues predominate over residues 865 to 887 (TDGSQSQNSGKASKISNIRNLLN).

The protein resides in the nucleus. In terms of biological role, transcriptional regulator involved in extension of germ tubes into elongated hyphae and maintenance of filamentous growth. Regulates expression of UME6. Acts in a pathway that regulates maintenance of hyphal growth by repressing hyphal-to-yeast transition and allows dissemination within host epithelial tissues. Dispensable for invasion into both host oral epithelial cells and enterocytes, but required for epithelial damage. The protein is Transcriptional regulator DEF1 (DEF1) of Candida albicans (strain SC5314 / ATCC MYA-2876) (Yeast).